The following is a 180-amino-acid chain: Large ribosomal subunit protein uL6 (180 aa).

Belongs to the universal ribosomal protein uL6 family. As to quaternary structure, part of the 50S ribosomal subunit.

Functionally, this protein binds to the 23S rRNA, and is important in its secondary structure. It is located near the subunit interface in the base of the L7/L12 stalk, and near the tRNA binding site of the peptidyltransferase center. This is Large ribosomal subunit protein uL6 from Desulforapulum autotrophicum (strain ATCC 43914 / DSM 3382 / VKM B-1955 / HRM2) (Desulfobacterium autotrophicum).